The sequence spans 311 residues: Olfactory receptor 1L4 (311 aa).

The Extracellular portion of the chain corresponds to 1–26 (METKNYSSSTSGFILLGLSSNPKLQK). Residue N5 is glycosylated (N-linked (GlcNAc...) asparagine). Residues 27–50 (PLFAIFLIMYLLTAVGNVLIILAI) traverse the membrane as a helical segment. The Cytoplasmic portion of the chain corresponds to 51–58 (YSDPRLHT). The chain crosses the membrane as a helical span at residues 59–80 (PMYFFLSNLSFMDICFTTVIVP). Residues 81–101 (KMLVNFLSETKIISYVGCLIQ) lie on the Extracellular side of the membrane. C98 and C190 are joined by a disulfide. A helical membrane pass occupies residues 102 to 121 (MYFFMAFGNTDSYLLASMAI). Topologically, residues 122–140 (DRLVAICNPLHYDVVMKPW) are cytoplasmic. A helical transmembrane segment spans residues 141–159 (HCLLMLLGSCSISHLHSLF). The Extracellular segment spans residues 160–197 (RVLLMSRLSFCASHIIKHFFCDTQPVLKLSCSDTSSSQ). The helical transmembrane segment at 198 to 220 (MVVMTETLAVIVTPFLCTIFSYL) threads the bilayer. At 221–237 (QIIVTVLRIPSAAGKWK) the chain is on the cytoplasmic side. Residues 238 to 260 (AFSTCGSHLTVVVLFYGSVIYVY) form a helical membrane-spanning segment. The Extracellular portion of the chain corresponds to 261–273 (FRPLSMYSVMKGR). Residues 274-293 (VATVMYTVVTPMLNPFIYSL) traverse the membrane as a helical segment. Residues 294–311 (RNKDMKRGLKKLRHRIYS) are Cytoplasmic-facing.

This sequence belongs to the G-protein coupled receptor 1 family.

It localises to the cell membrane. Its function is as follows. Odorant receptor. The polypeptide is Olfactory receptor 1L4 (OR1L4) (Homo sapiens (Human)).